A 1551-amino-acid chain; its full sequence is Transient receptor potential cation channel subfamily M member-like 2 (1551 aa).

At 1–714 (MGKDSFTPLY…WMGTMAMNTR (714 aa)) the chain is on the cytoplasmic side. Residues 715–730 (WWKVLVCLYLPVLIFP) lie within the membrane without spanning it. At 731–837 (IIYFVPDEQH…DRIMHFYSAP (107 aa)) the chain is on the cytoplasmic side. The segment at 744-767 (AAEREHQKSLNQKSSKVKSHKEKN) is disordered. Residues 838–858 (FSKFVGNVVGYLAFIFLYAYV) form a helical membrane-spanning segment. Residues 859-877 (VLFNFPRFDPAKTLGGIHP) lie on the Extracellular side of the membrane. A helical membrane pass occupies residues 878-898 (TEIVLYFWVFTILIEEIRQLA). Positions 893 and 896 each coordinate Ca(2+). Residues 899-916 (AKPPKYIKDKVSVYFSDT) are Cytoplasmic-facing. The chain crosses the membrane as a helical span at residues 917–937 (WNFVDIFSLTVFIIAIILRFF). Asn-918 and Asp-921 together coordinate Ca(2+). The Extracellular segment spans residues 938–947 (TNSRIFTASR). Residues 948-968 (IILSLDIIFFIVRSLQIFSVN) traverse the membrane as a helical segment. At 969–980 (RLLGPKLVMIQK) the chain is on the cytoplasmic side. Residues 981-1001 (MMQDLAQFIIILAVFTIAYGI) form a helical membrane-spanning segment. Over 1002–1018 (ALHAVMFPSPGIYARNN) the chain is Extracellular. The N-linked (GlcNAc...) asparagine glycan is linked to Asn-1017. Residues 1019–1034 (TWVTITSVVQYPYWQM) constitute an intramembrane region (pore-forming). The Selectivity filter signature appears at 1035-1037 (YGE). Residues 1035-1059 (YGELFLDEIQGEKPKEFGEVDPDGR) are Extracellular-facing. Residues 1040–1042 (LDE) carry the Prevents fast channel inactivation motif. A helical membrane pass occupies residues 1060 to 1080 (WLSPLLLAIYMVFTNILLLNL). Residues 1081-1116 (LIAIFNYTFERVQEDSDKVWKFQRYDLVQEYHSRPV) lie on the Cytoplasmic side of the membrane. Residues 1117-1135 (FAPPLVLLGHILIFIRWVW) lie within the membrane without spanning it. Residues 1136–1551 (RMCRCGHPPR…KVAKMRDAAF (416 aa)) are Cytoplasmic-facing. The stretch at 1184–1209 (LEERVRALGDRVDCINSQLNRVLDSM) forms a coiled coil. One can recognise a Nudix hydrolase domain in the interval 1394-1546 (WKRTSAGVML…VSILEKVAKM (153 aa)). A Nudix box motif is present at residues 1428-1449 (GMVEPGQLVTQALKAEFGEEAM).

The protein belongs to the transient receptor (TC 1.A.4) family. LTrpC subfamily. TRPM2 sub-subfamily. In terms of assembly, homotetramer.

It is found in the cell membrane. Its activity is regulated as follows. Activated by phosphatidylinositol 4,5-bisphosphate (PIP2). Although PIP2 is essential for the channel activation, its contribution to the level of channel activity is minimal. Also activated by diphosphate ribose-2'-phosphate. Upon binding to ADPR, channel activation requires only a short initial cytosolic Ca(2+) increase, then the activation is sustained by the uptake of extracellular Ca(2+). Activated by 2-aminoethyl diphenylborinate (2-APB) in a Ca(2+)-dependent manner. 2-APB prevents the inactivation of the channel. Nonselective, voltage-independent cation channel that mediates Ca(2+) and to a lesser extent Na(+) influx, leading to increased cytoplasmic Ca(2+) levels. Functions as a ligand-gated ion channel. Binding of ADP-ribose causes a conformation change; the channel is primed but still requires Ca(2+) binding to trigger channel opening. May have ADP-ribose pyrophosphatase activity which reduces ADP-ribose levels induced by oxidative stress, thus preventing the channel activation by reactive oxygen species. This chain is Transient receptor potential cation channel subfamily M member-like 2, found in Nematostella vectensis (Starlet sea anemone).